Consider the following 93-residue polypeptide: MEITEVRVQRVSPGNSLKAYANITFDDCFVLHNVRVIEGNDGLYIGMPSRKLSNGEFKNIAHPITAEFREKMTKAVLEVYEKTPIMPGQEAEI.

The protein belongs to the SpoVG family.

Could be involved in septation. This chain is Putative septation protein SpoVG, found in Treponema denticola (strain ATCC 35405 / DSM 14222 / CIP 103919 / JCM 8153 / KCTC 15104).